Reading from the N-terminus, the 357-residue chain is Non-structural protein NS2 (357 aa).

Disordered regions lie at residues Gln162–Met199 and Leu228–Ile268. 2 stretches are compositionally biased toward acidic residues: residues Glu230–Glu243 and Asp250–Asp260.

This sequence belongs to the orbivirus non-structural protein NS2 family.

Functionally, single-stranded RNA-binding protein. This Antilocapra americana (Pronghorn) protein is Non-structural protein NS2 (Segment-8).